The chain runs to 76 residues: Exodeoxyribonuclease 7 small subunit (76 aa).

It belongs to the XseB family. As to quaternary structure, heterooligomer composed of large and small subunits.

It is found in the cytoplasm. It catalyses the reaction Exonucleolytic cleavage in either 5'- to 3'- or 3'- to 5'-direction to yield nucleoside 5'-phosphates.. In terms of biological role, bidirectionally degrades single-stranded DNA into large acid-insoluble oligonucleotides, which are then degraded further into small acid-soluble oligonucleotides. The polypeptide is Exodeoxyribonuclease 7 small subunit (Bacillus cytotoxicus (strain DSM 22905 / CIP 110041 / 391-98 / NVH 391-98)).